The chain runs to 285 residues: 2,3,4,5-tetrahydropyridine-2,6-dicarboxylate N-succinyltransferase (285 aa).

Residues R111 and D148 each coordinate substrate.

Belongs to the transferase hexapeptide repeat family. In terms of assembly, homotrimer.

The protein localises to the cytoplasm. The enzyme catalyses (S)-2,3,4,5-tetrahydrodipicolinate + succinyl-CoA + H2O = (S)-2-succinylamino-6-oxoheptanedioate + CoA. It functions in the pathway amino-acid biosynthesis; L-lysine biosynthesis via DAP pathway; LL-2,6-diaminopimelate from (S)-tetrahydrodipicolinate (succinylase route): step 1/3. The polypeptide is 2,3,4,5-tetrahydropyridine-2,6-dicarboxylate N-succinyltransferase (Sinorhizobium fredii (strain NBRC 101917 / NGR234)).